A 198-amino-acid polypeptide reads, in one-letter code: Superoxide dismutase [Fe] (198 aa).

Fe(3+) is bound by residues His27, His74, Asp157, and His161.

This sequence belongs to the iron/manganese superoxide dismutase family. As to quaternary structure, homodimer. Fe(3+) is required as a cofactor.

The catalysed reaction is 2 superoxide + 2 H(+) = H2O2 + O2. Its function is as follows. Destroys superoxide anion radicals which are normally produced within the cells and which are toxic to biological systems. The protein is Superoxide dismutase [Fe] (sodB) of Pseudomonas putida (Arthrobacter siderocapsulatus).